A 625-amino-acid chain; its full sequence is Sorting nexin-41 (625 aa).

The tract at residues Met-1 to Ala-90 is disordered. Residues Ser-54–Ala-86 show a composition bias toward low complexity. In terms of domain architecture, PX spans Val-98–Trp-235. Residues Arg-153, Ser-155, Lys-179, and Arg-202 each coordinate a 1,2-diacyl-sn-glycero-3-phospho-(1D-myo-inositol-3-phosphate). Coiled coils occupy residues Gln-437 to Leu-469 and Gln-539 to Leu-563.

This sequence belongs to the sorting nexin family. In terms of assembly, binds to SNX4.

The protein resides in the prevacuolar compartment. Its subcellular location is the endosome. It localises to the endosome membrane. Functionally, involved in proper sorting of the v-SNARE protein SNC1. The sequence is that of Sorting nexin-41 (SNX41) from Saccharomyces cerevisiae (strain ATCC 204508 / S288c) (Baker's yeast).